Here is a 1663-residue protein sequence, read N- to C-terminus: Complement C3 (1663 aa).

Residues 1–24 (MGPASGSQLLVLLLLLASSPLALG) form the signal peptide. A Phosphoserine modification is found at serine 40. Cystine bridges form between cysteine 559–cysteine 816, cysteine 626–cysteine 661, cysteine 693–cysteine 720, cysteine 694–cysteine 727, cysteine 707–cysteine 728, cysteine 873–cysteine 1513, cysteine 1101–cysteine 1158, cysteine 1358–cysteine 1489, cysteine 1389–cysteine 1458, cysteine 1506–cysteine 1511, cysteine 1518–cysteine 1590, cysteine 1537–cysteine 1661, and cysteine 1637–cysteine 1646. At serine 671 the chain carries Phosphoserine. Positions 693–728 (CCEDGMRDIPMRYSCQRRARLITQGENCIKAFIDCC) constitute an Anaphylatoxin-like domain. N-linked (GlcNAc...) asparagine glycosylation is present at asparagine 939. A Phosphoserine modification is found at serine 968. Residues 1010–1013 (CGEQ) constitute a cross-link (isoglutamyl cysteine thioester (Cys-Gln)). At serine 1321 the chain carries Phosphoserine. The 144-residue stretch at 1518 to 1661 (CFMQQSQEKI…FTESMVVYGC (144 aa)) folds into the NTR domain. Position 1573 is a phosphoserine (serine 1573). The N-linked (GlcNAc...) asparagine glycan is linked to asparagine 1617. The tract at residues 1634-1659 (AEECQDQKYQKQCEELGAFTESMVVY) is interaction with CFP/properdin.

In terms of assembly, in absence of complement activation, the C3 precursor is first processed by the removal of 4 Arg residues, forming two chains, beta and alpha, linked by a disulfide bond. As to quaternary structure, complement C3b is composed of complement C3b and complement C3 beta chains that are associated via disulfide bonds. Non-enzymatic component of the C5 convertase, also named C4bC2bC3b, composed of the serine protease complement C2b (C2), complement C3b, as well as complement C4b (C4). Non-enzymatic component of the C5 convertase of the alternative complement pathways composed of the serine protease complement CFB and complement C3b. Interacts with CFP; interaction takes place together with CFB in the alternative complement system and allows the complex to become active. Interacts with CR1 (via Sushi 8 and Sushi 9 domains). Interacts with CFH. Interacts with CFH. Interacts with CR2. In terms of assembly, during pregnancy, C3dg exists as a complex (probably a 2:2:2 heterohexamer) with AGT and the proform of PRG2. Interacts with CR2 (via the N-terminal Sushi domains 1 and 2). In terms of processing, C3 precursor is first processed by the removal of 4 Arg residues, forming two chains, beta and alpha, linked by a disulfide bond. During activation of the complement systems, the alpha chain is cleaved into C3a and C3b by the C3 convertase: C3b stays linked to the beta chain, while C3a is released in the plasma. The alpha chain is cleaved by the serine protease complement C2b component of the C3 convertase to generate C3a and C3b following activation by the classical, lectin and GZMK complement systems. The alpha chain is cleaved by CFB component of the C3 convertase to generate C3a and C3b following activation by the alternative complement system. Post-translationally, C3a is further processed by carboxypeptidases to release the C-terminal arginine residue generating the acylation stimulating protein (ASP). Levels of ASP are increased in adipocytes in the postprandial period and by insulin and dietary chylomicrons. Complement C3b is rapidly split in two positions by factor I (CFI) and a cofactor (CFH) to form iC3b (inactivated C3b) and C3f which is released. CFI and CFH catalyze proteolytic degradation of already-deposited complement C3b. Then iC3b is slowly cleaved (possibly by CFI) to form C3c (beta chain + alpha' chain fragment 1 + alpha' chain fragment 2), C3dg and C3f. Other proteases produce other fragments such as C3d or C3g. In terms of processing, upon activation, the internal thioester bond reacts with carbohydrate antigens on the target surface to form amide or ester bonds, leading to covalent association with the surface of pathogens. Post-translationally, complement C3b interacts with complement C4b via a thioester linkage. Phosphorylated by FAM20C in the extracellular medium.

The protein resides in the secreted. Its subcellular location is the cell surface. With respect to regulation, complement activation is inhibited by VSIG4. In terms of biological role, precursor of non-enzymatic components of the classical, alternative, lectin and GZMK complement pathways, which consist in a cascade of proteins that leads to phagocytosis and breakdown of pathogens and signaling that strengthens the adaptive immune system. Functionally, non-enzymatic component of C5 convertase. Generated following cleavage by C3 convertase, it covalently attaches to the surface of pathogens, where it acts as an opsonin that marks the surface of antigens for removal. Complement C3b binds covalently via its reactive thioester, to cell surface carbohydrates or immune aggregates. Together with complement C4b, it then recruits the serine protease complement C2b to form the C5 convertase, which cleaves and activate C5, the next component of the complement pathways. In the alternative complement pathway, recruits the serine protease CFB to form the C5 convertase that cleaves and activates C5. Its function is as follows. Mediator of local inflammatory process released following cleavage by C3 convertase. Acts by binding to its receptor, C3AR1, activating G protein-coupled receptor signaling, promoting the phosphorylation, ARRB2-mediated internalization and endocytosis of C3AR1. C3a anaphylatoxin stimulates the activation of immune cells such as mast cells and basophilic leukocytes to release inflammation agents, such as cytokines, chemokines and histamine, which promote inflammation development. Also acts as potent chemoattractant for the migration of macrophages and neutrophils to the inflamed tissues, resulting in neutralization of the inflammatory triggers by multiple ways, such as phagocytosis and generation of reactive oxidants. Adipogenic hormone that stimulates triglyceride synthesis and glucose transport in adipocytes, regulating fat storage and playing a role in postprandial triglyceride clearance. Appears to stimulate triglyceride synthesis via activation of the PLC, MAPK and AKT signaling pathways. Acts by binding to its receptor, C5AR2, activating G protein-coupled receptor signaling, promoting the phosphorylation, ARRB2-mediated internalization and endocytosis of C5AR2. In terms of biological role, acts as a chemoattractant for neutrophils in chronic inflammation. The chain is Complement C3 from Mus musculus (Mouse).